A 225-amino-acid polypeptide reads, in one-letter code: Cbp/p300-interacting transactivator 2 (225 aa).

The protein belongs to the CITED family.

It localises to the nucleus. In terms of biological role, transcriptional coactivator or corepressor of the p300/CBP-mediated transcription complex. May be involved in sex determination, early gonad development, left-right patterning during embryogenesis and differentiation of the adrenal cortex. The sequence is that of Cbp/p300-interacting transactivator 2 (cited2) from Xenopus tropicalis (Western clawed frog).